Consider the following 154-residue polypeptide: Large ribosomal subunit protein uL13 (154 aa).

Belongs to the universal ribosomal protein uL13 family. In terms of assembly, part of the 50S ribosomal subunit.

Functionally, this protein is one of the early assembly proteins of the 50S ribosomal subunit, although it is not seen to bind rRNA by itself. It is important during the early stages of 50S assembly. The sequence is that of Large ribosomal subunit protein uL13 from Allorhizobium ampelinum (strain ATCC BAA-846 / DSM 112012 / S4) (Agrobacterium vitis (strain S4)).